Reading from the N-terminus, the 146-residue chain is SMR1 protein (146 aa).

Residues 1-22 form the signal peptide; that stretch reads MKSLYLIFGLWILLACFQSGEG. 2 disordered regions span residues 23 to 43 and 99 to 146; these read VRGP…TLPH and TAPD…GGGK. The span at 109 to 139 shows a compositional bias: polar residues; that stretch reads PPTQLHSTEQANTKTDAKISNTTATTQNSTD. N-linked (GlcNAc...) asparagine glycosylation is found at N129 and N136.

Post-translationally, several O-linked glycosylation sites might be present in the C-terminal part. Expressed predominantly in the acinar cells of the submandibular gland and to lesser extent in the prostate.

Its subcellular location is the secreted. In terms of biological role, sialorphin may be involved in the modulation of mineral balance between at least four systems: kidney, bone, tooth and circulation. Its function is as follows. Submandibular gland peptide T is able to directly or indirectly down-regulate cardiovascular depression induced by septic shock (endotoxin stimuli), or anaphylactic challenge (nematode antigen sensitization). Sialorphin is an endogenous inhibitor of neprilysin. Inhibits the breakdown of Met-enkephalin and substance P in isolated tissue from the dorsal zone of the rat spinal cord. Has an analgesic effect when administered to rats by intravenous injection. The protein is SMR1 protein (Vcsa1) of Rattus norvegicus (Rat).